We begin with the raw amino-acid sequence, 834 residues long: MAP kinase phosphatase with leucine-rich repeats protein 1 (834 aa).

The segment at 1 to 103 (MIFKKLFSKG…GSGTTKESKK (103 aa)) is disordered. Residues 36-78 (GSGTNTNGLSNSTTNPSSIHSTPTTPTTTASTNLTNSNKLSTL) are compositionally biased toward low complexity. Positions 79–98 (APITNGNRSLRGSKDGSGTT) are enriched in polar residues. LRR repeat units lie at residues 160–181 (ELRS…IGLL), 183–204 (NLKH…LSQL), 206–226 (SLES…NICK), 229–251 (SLTL…INLE), 252–273 (NLKD…LPNN), 274–292 (IEKL…SKSL), 298–319 (SLTT…LSCL), 321–342 (NVKT…VLGS), 345–366 (SLVT…IVTL), and 368–389 (NLRI…PSSE). Positions 503 to 584 (YEKQENDENN…ENPLKESQGK (82 aa)) are disordered. The segment covering 511–536 (NNSVTLETTTTISIASDNTDEASIQI) has biased composition (polar residues). Basic and acidic residues-rich tracts occupy residues 538–554 (QKED…DKLL) and 569–582 (KQQE…KESQ). Residues 555-615 (QESFSENNNN…IRLEKIKYQE (61 aa)) adopt a coiled-coil conformation. The Tyrosine-protein phosphatase domain maps to 695 to 834 (VPDLIIDKLY…LKKFEKDLSK (140 aa)). Cysteine 778 serves as the catalytic Phosphocysteine intermediate.

This sequence belongs to the protein-tyrosine phosphatase family. Non-receptor class dual specificity subfamily.

The catalysed reaction is O-phospho-L-tyrosyl-[protein] + H2O = L-tyrosyl-[protein] + phosphate. The enzyme catalyses O-phospho-L-seryl-[protein] + H2O = L-seryl-[protein] + phosphate. It catalyses the reaction O-phospho-L-threonyl-[protein] + H2O = L-threonyl-[protein] + phosphate. Probable phosphatase with dual specificity toward Ser/Thr and Tyr-containing proteins. Dephosphorylates pNPP, in vitro. Essential for proper regulation of erkB (erk2) and optimal motility during development. This Dictyostelium discoideum (Social amoeba) protein is MAP kinase phosphatase with leucine-rich repeats protein 1 (mpl1).